The sequence spans 164 residues: MMKTSAIHSPFEAPNTISLVAGTGDAKNPLNAFDMSLLESGIGNLNLIRISSIMPPKADIIPLPKIPQGSLVPTAYGYQISELKGETVAAGISVAIPKDKELCGLIMEYECIGGKKECEDTVRNMAKEGFEMRGWEIDEIISIASEHTVENIGCAFAAAALWYK.

Ser52 carries the pyruvic acid (Ser) modification.

The protein belongs to the PdaD family. Pyruvate is required as a cofactor.

The enzyme catalyses L-arginine + H(+) = agmatine + CO2. The chain is Pyruvoyl-dependent arginine decarboxylase from Methanococcus maripaludis (strain C6 / ATCC BAA-1332).